The following is a 120-amino-acid chain: Ribonuclease P protein component (120 aa).

The protein belongs to the RnpA family. In terms of assembly, consists of a catalytic RNA component (M1 or rnpB) and a protein subunit.

It catalyses the reaction Endonucleolytic cleavage of RNA, removing 5'-extranucleotides from tRNA precursor.. Its function is as follows. RNaseP catalyzes the removal of the 5'-leader sequence from pre-tRNA to produce the mature 5'-terminus. It can also cleave other RNA substrates such as 4.5S RNA. The protein component plays an auxiliary but essential role in vivo by binding to the 5'-leader sequence and broadening the substrate specificity of the ribozyme. In Azoarcus sp. (strain BH72), this protein is Ribonuclease P protein component.